The sequence spans 208 residues: Ras-related protein M-Ras (208 aa).

Aspartate 21, glycine 22, glycine 23, valine 24, glycine 25, lysine 26, serine 27, alanine 28, phenylalanine 38, valine 39, proline 40, tyrosine 42, proline 44, and threonine 45 together coordinate GTP. Serine 27 is a Mg(2+) binding site. The Effector region signature appears at 42-50; the sequence is YDPTIEDSY. Mg(2+)-binding residues include threonine 45 and aspartate 67. The GTP site is built by glycine 70, asparagine 126, lysine 127, aspartate 129, serine 156, alanine 157, and lysine 158. Cysteine methyl ester is present on cysteine 205. Cysteine 205 carries S-geranylgeranyl cysteine lipidation. Residues 206 to 208 constitute a propeptide, removed in mature form; sequence VIL.

It belongs to the small GTPase superfamily. Ras family. Component of the SHOC2-MRAS-PP1c (SMP) holophosphatase complex consisting of SHOC2, GTP-bound M-Ras/MRAS and the catalytic subunit of protein phosphatase 1 (either PPP1CA, PPP1CB or PPP1CC). Interacts (active GTP-bound form) with both SHOC2 and PP1c (all isoforms) to form a tertiary complex; SHOC2 and PP1c preferably bind M-Ras/MRAS, but they also bind K-Ras/KRAS, N-Ras/NRAS and H-Ras/HRAS. Interacts with RGL3. Interacts (active GTP-bound form preferentially) with RGS14. Requires Mg(2+) as cofactor. As to expression, expression highly restricted to the brain and heart.

It is found in the cell membrane. It catalyses the reaction GTP + H2O = GDP + phosphate + H(+). Functionally, signal transducer in the Ras-MAPK signaling pathway that regulates cell proliferation and survival. Core component of the SHOC2-MRAS-PP1c (SMP) holophosphatase complex that regulates the MAPK pathway activation. The formation of the SMP complex only occurs when MRAS is GTP-bound. MRAS has low intrinsic GTPase activity and may require additional factors for activation. The SMP complex specifically dephosphorylates the inhibitory phosphorylation at 'Ser-259' of RAF1 kinase, 'Ser-365' of BRAF kinase and 'Ser-214' of ARAF kinase, stimulating their kinase activities. The polypeptide is Ras-related protein M-Ras (MRAS) (Homo sapiens (Human)).